We begin with the raw amino-acid sequence, 1416 residues long: DNA-directed RNA polymerase subunit beta (1416 aa).

A disordered region spans residues 1388–1416 (AKAAREQAEGELGGPLGTPRGAAAEKNTA).

This sequence belongs to the RNA polymerase beta chain family. As to quaternary structure, the RNAP catalytic core consists of 2 alpha, 1 beta, 1 beta' and 1 omega subunit. When a sigma factor is associated with the core the holoenzyme is formed, which can initiate transcription.

It catalyses the reaction RNA(n) + a ribonucleoside 5'-triphosphate = RNA(n+1) + diphosphate. Functionally, DNA-dependent RNA polymerase catalyzes the transcription of DNA into RNA using the four ribonucleoside triphosphates as substrates. The polypeptide is DNA-directed RNA polymerase subunit beta (Anaeromyxobacter sp. (strain Fw109-5)).